The chain runs to 236 residues: 7-cyano-7-deazaguanine synthase (236 aa).

7 to 17 (CSGGLDSVSLA) contacts ATP. Positions 185, 193, 196, and 199 each coordinate Zn(2+).

The protein belongs to the QueC family. Zn(2+) serves as cofactor.

The catalysed reaction is 7-carboxy-7-deazaguanine + NH4(+) + ATP = 7-cyano-7-deazaguanine + ADP + phosphate + H2O + H(+). The protein operates within purine metabolism; 7-cyano-7-deazaguanine biosynthesis. In terms of biological role, catalyzes the ATP-dependent conversion of 7-carboxy-7-deazaguanine (CDG) to 7-cyano-7-deazaguanine (preQ(0)). The polypeptide is 7-cyano-7-deazaguanine synthase (Rhizobium meliloti (strain 1021) (Ensifer meliloti)).